The chain runs to 364 residues: V-type proton ATPase subunit d (364 aa).

This sequence belongs to the V-ATPase V0D/AC39 subunit family. V-ATPase is a heteromultimeric enzyme composed of a peripheral catalytic V1 complex (components A to H) attached to an integral membrane V0 proton pore complex (components: a, c, c', c'', d, e, f and VOA1).

It localises to the vacuole membrane. Its function is as follows. Subunit of the V0 complex of vacuolar(H+)-ATPase (V-ATPase), a multisubunit enzyme composed of a peripheral complex (V1) that hydrolyzes ATP and a membrane integral complex (V0) that translocates protons. V-ATPase is responsible for acidifying and maintaining the pH of intracellular compartments. This subunit is a non-integral membrane component of the membrane pore domain and is required for proper assembly of the V0 sector. Might be involved in the regulated assembly of V1 subunits onto the membrane sector or alternatively may prevent the passage of protons through V0 pores. In Neurospora crassa (strain ATCC 24698 / 74-OR23-1A / CBS 708.71 / DSM 1257 / FGSC 987), this protein is V-type proton ATPase subunit d.